Here is a 324-residue protein sequence, read N- to C-terminus: Casein kinase I (324 aa).

One can recognise a Protein kinase domain in the interval 9–278; sequence YALGKKLGSG…LRRLLKDLFI (270 aa). ATP is bound by residues 15–23 and lysine 38; that span reads LGSGSFGDI. The Proton acceptor role is filled by aspartate 128.

It belongs to the protein kinase superfamily. CK1 Ser/Thr protein kinase family. Casein kinase I subfamily. As to quaternary structure, interacts with rhoptry protein RON3; the interaction is direct. Interacts with CK2alpha; the interaction is direct. Interacts with nucleosome assembly protein NAPL. Interacts with RAB5b. Interacts with host GAPVD1. Interacts with host SNX22. It depends on Mg(2+) as a cofactor.

The protein localises to the cytoplasm. Its subcellular location is the cytoplasmic vesicle. The protein resides in the secretory vesicle. It localises to the microneme. It is found in the secreted. The protein localises to the host cell surface. It catalyses the reaction L-seryl-[protein] + ATP = O-phospho-L-seryl-[protein] + ADP + H(+). It carries out the reaction L-threonyl-[protein] + ATP = O-phospho-L-threonyl-[protein] + ADP + H(+). Its function is as follows. Serine/threonine-protein kinase likely to be involved in many cellular processes. Phosphorylates rhoptry protein RON3, nucleosome assembly protein NAPL and DNA/RNA-binding protein ALBA4 in vitro. The polypeptide is Casein kinase I (Plasmodium falciparum (isolate Dd2)).